The primary structure comprises 221 residues: Glutathione S-transferase (221 aa).

M1 carries the N-acetylmethionine modification. At A2 the chain carries N-acetylalanine; in Glutathione S-transferase, N-terminally processed. The GST N-terminal domain occupies 3-82 (GEQNIKYFNI…YIAEKYNLLG (80 aa)). Glutathione contacts are provided by residues Y9, K45, 53–54 (QV), and 66–67 (QT). One can recognise a GST C-terminal domain in the interval 84–208 (DMKEHAQIIM…PGSKRKPVPD (125 aa)).

Belongs to the GST superfamily. Alpha family. Homodimer or heterodimer of GSTA1 and GSTA2.

The protein resides in the cytoplasm. The enzyme catalyses RX + glutathione = an S-substituted glutathione + a halide anion + H(+). The catalysed reaction is prostaglandin A2 + glutathione = prostaglandin A2-S-(R)-glutathione. It carries out the reaction prostaglandin J2 + glutathione = prostaglandin J2-S-(R)-glutathione. It catalyses the reaction (13S)-hydroperoxy-(9Z,11E)-octadecadienoate + 2 glutathione = (13S)-hydroxy-(9Z,11E)-octadecadienoate + glutathione disulfide + H2O. The enzyme catalyses androst-5-ene-3,17-dione = androst-4-ene-3,17-dione. Glutathione S-transferase that catalyzes the nucleophilic attack of the sulfur atom of glutathione on the electrophilic groups of a wide range of exogenous and endogenous compounds. Involved in the formation of glutathione conjugates of both prostaglandin A2 (PGA2) and prostaglandin J2 (PGJ2). It also catalyzes the isomerization of D5-androstene-3,17-dione (AD) into D4-androstene-3,17-dione and may therefore play an important role in hormone biosynthesis. Through its glutathione-dependent peroxidase activity toward the fatty acid hydroperoxide (13S)-hydroperoxy-(9Z,11E)-octadecadienoate/13-HPODE it is also involved in the metabolism of oxidized linoleic acid. The chain is Glutathione S-transferase from Antechinus stuartii (Brown marsupial mouse).